Reading from the N-terminus, the 59-residue chain is Transcription elongation factor Spt4 (59 aa).

Zn(2+) is bound by residues Cys4, Cys7, Cys16, and Cys19.

This sequence belongs to the archaeal Spt4 family. In terms of assembly, heterodimer composed of Spt4 and Spt5.

In terms of biological role, stimulates transcription elongation. The sequence is that of Transcription elongation factor Spt4 from Methanocaldococcus jannaschii (strain ATCC 43067 / DSM 2661 / JAL-1 / JCM 10045 / NBRC 100440) (Methanococcus jannaschii).